A 267-amino-acid polypeptide reads, in one-letter code: uncharacterized protein (267 aa).

A helical membrane pass occupies residues 30–52 (FMRIFLLFLFFVLFTFGVEGYVI).

It is found in the membrane. This is an uncharacterized protein from Aquifex aeolicus (strain VF5).